Consider the following 208-residue polypeptide: Ubiquitin-conjugating enzyme E2 S (208 aa).

The UBC core domain occupies 14–160 (QTIRQVMKEL…ARMMTEIHAQ (147 aa)). The active-site Glycyl thioester intermediate is the Cys98. A disordered region spans residues 161–196 (PAKCGAGASDAKDDDGPSTKKHAGVDKKLQDKKKEK). The span at 170-196 (DAKDDDGPSTKKHAGVDKKLQDKKKEK) shows a compositional bias: basic and acidic residues.

It belongs to the ubiquitin-conjugating enzyme family.

It catalyses the reaction S-ubiquitinyl-[E1 ubiquitin-activating enzyme]-L-cysteine + [E2 ubiquitin-conjugating enzyme]-L-cysteine = [E1 ubiquitin-activating enzyme]-L-cysteine + S-ubiquitinyl-[E2 ubiquitin-conjugating enzyme]-L-cysteine.. The protein operates within protein modification; protein ubiquitination. Catalyzes the covalent attachment of ubiquitin to other proteins. Acts as an essential factor of the anaphase promoting complex/cyclosome (APC/C), a cell cycle-regulated ubiquitin ligase that controls progression through mitosis. Acts by specifically elongating polyubiquitin chains initiated by the E2 enzyme vih/UbcH10 on APC/C substrates, enhancing the degradation of APC/C substrates by the proteasome and promoting mitotic exit. The protein is Ubiquitin-conjugating enzyme E2 S of Drosophila grimshawi (Hawaiian fruit fly).